The following is a 306-amino-acid chain: N-acetylmuramic acid 6-phosphate etherase (306 aa).

Residues 60–223 (TAAALRGGGR…STGAMVRLGK (164 aa)) enclose the SIS domain. Glu-88 serves as the catalytic Proton donor. Glu-119 is a catalytic residue.

It belongs to the GCKR-like family. MurNAc-6-P etherase subfamily. Homodimer.

It carries out the reaction N-acetyl-D-muramate 6-phosphate + H2O = N-acetyl-D-glucosamine 6-phosphate + (R)-lactate. It functions in the pathway amino-sugar metabolism; N-acetylmuramate degradation. Its function is as follows. Specifically catalyzes the cleavage of the D-lactyl ether substituent of MurNAc 6-phosphate, producing GlcNAc 6-phosphate and D-lactate. This chain is N-acetylmuramic acid 6-phosphate etherase, found in Gloeobacter violaceus (strain ATCC 29082 / PCC 7421).